We begin with the raw amino-acid sequence, 240 residues long: MORN repeat-containing protein 3 (240 aa).

The interval 6–35 (CPKKSESLWKGWDRKAQKNGLRRQVYAVNG) is interaction with MDM2. 7 MORN repeats span residues 38–60 (YVGE…KNGA), 62–84 (YEGD…DQQT), 91–113 (YSGW…PKEY), 114–136 (YEGE…NGDI), 137–159 (YEGQ…NGNR), 160–182 (YEGC…DHGQ), and 184–205 (FEGF…GRDE). Positions 76–100 (TLSLPDQQTGKCRRVYSGWWKGDKK) are interaction with SIRT1. The segment at 206–240 (APEPTQFPIPEVKILDPDGVLAQALAMFKKTEEGD) is interaction with TP53.

In terms of assembly, interacts with MEIG1. Interacts with TP53, MDM2 and SIRT1; the interactions mediate post-transcriptional modifications of TP53 by MDM2 and SIRT1.

The protein resides in the cytoplasmic vesicle. It is found in the secretory vesicle. Its subcellular location is the acrosome. In terms of biological role, assembles a suppression complex (suppresome) by tethering SIRT1 and MDM2 to regulate composite modifications of p53/TP53. Confers both deacetylation-mediated functional inactivation, by SIRT1, and ubiquitination-dependent degradation, by MDM2, of p53/TP53, promoting a proliferative and cell survival behaviors. May play a role in the regulation of spermatogenesis. This Macaca fascicularis (Crab-eating macaque) protein is MORN repeat-containing protein 3 (MORN3).